The sequence spans 191 residues: COP9 signalosome complex subunit 8 (191 aa).

In terms of domain architecture, PCI spans 6-179 (MMAELDEKLL…VSLVPNEQQL (174 aa)).

It belongs to the CSN8 family. As to quaternary structure, component of the CSN complex, probably composed of cops1, cops2, cops3, cops4, cops5, cops6, cops7, cops8 and cops9.

It is found in the cytoplasm. The protein localises to the nucleus. Component of the COP9 signalosome complex (CSN), a complex involved in various cellular and developmental processes. The CSN complex is an essential regulator of the ubiquitin (Ubl) conjugation pathway by mediating the deneddylation of the cullin subunits of E3 ligase complexes, leading to modify the Ubl ligase activity. The chain is COP9 signalosome complex subunit 8 (cops8) from Danio rerio (Zebrafish).